The primary structure comprises 448 residues: Probable glycine dehydrogenase (decarboxylating) subunit 1 (448 aa).

This sequence belongs to the GcvP family. N-terminal subunit subfamily. As to quaternary structure, the glycine cleavage system is composed of four proteins: P, T, L and H. In this organism, the P 'protein' is a heterodimer of two subunits.

The enzyme catalyses N(6)-[(R)-lipoyl]-L-lysyl-[glycine-cleavage complex H protein] + glycine + H(+) = N(6)-[(R)-S(8)-aminomethyldihydrolipoyl]-L-lysyl-[glycine-cleavage complex H protein] + CO2. Its function is as follows. The glycine cleavage system catalyzes the degradation of glycine. The P protein binds the alpha-amino group of glycine through its pyridoxal phosphate cofactor; CO(2) is released and the remaining methylamine moiety is then transferred to the lipoamide cofactor of the H protein. The chain is Probable glycine dehydrogenase (decarboxylating) subunit 1 from Geobacillus thermodenitrificans (strain NG80-2).